A 79-amino-acid chain; its full sequence is RNA-binding protein Hfq (79 aa).

The Sm domain occupies 10 to 70 (DVFLNTVRKQ…ISTIMPGQPV (61 aa)).

Belongs to the Hfq family. In terms of assembly, homohexamer.

RNA chaperone that binds small regulatory RNA (sRNAs) and mRNAs to facilitate mRNA translational regulation in response to envelope stress, environmental stress and changes in metabolite concentrations. Also binds with high specificity to tRNAs. This chain is RNA-binding protein Hfq, found in Bartonella tribocorum (strain CIP 105476 / IBS 506).